The chain runs to 51 residues: Insulin (51 aa).

Cystine bridges form between Cys-7–Cys-37, Cys-19–Cys-50, and Cys-36–Cys-41.

This sequence belongs to the insulin family. As to quaternary structure, heterodimer of a B chain and an A chain linked by two disulfide bonds.

The protein resides in the secreted. Functionally, insulin decreases blood glucose concentration. It increases cell permeability to monosaccharides, amino acids and fatty acids. It accelerates glycolysis, the pentose phosphate cycle, and glycogen synthesis in liver. The sequence is that of Insulin (INS) from Capra hircus (Goat).